The sequence spans 140 residues: ATP synthase epsilon chain (140 aa).

It belongs to the ATPase epsilon chain family. As to quaternary structure, F-type ATPases have 2 components, CF(1) - the catalytic core - and CF(0) - the membrane proton channel. CF(1) has five subunits: alpha(3), beta(3), gamma(1), delta(1), epsilon(1). CF(0) has three main subunits: a, b and c.

It is found in the cell inner membrane. Functionally, produces ATP from ADP in the presence of a proton gradient across the membrane. In Thermodesulfovibrio yellowstonii (strain ATCC 51303 / DSM 11347 / YP87), this protein is ATP synthase epsilon chain.